The sequence spans 267 residues: Matrilysin (267 aa).

An N-terminal signal peptide occupies residues M1–A17. A propeptide spans L18 to E94 (activation peptide). The Cysteine switch motif lies at P85–V92. C87 provides a ligand contact to Zn(2+). Residue D153 coordinates Ca(2+). Zn(2+) is bound by residues H163 and D165. Positions 170, 171, 173, and 175 each coordinate Ca(2+). H178 serves as a coordination point for Zn(2+). 3 residues coordinate Ca(2+): G185, G187, and D189. H191 provides a ligand contact to Zn(2+). Positions 193 and 196 each coordinate Ca(2+). H214 contributes to the Zn(2+) binding site. E215 is an active-site residue. Residues H218 and H224 each coordinate Zn(2+).

The protein belongs to the peptidase M10A family. It depends on Ca(2+) as a cofactor. Requires Zn(2+) as cofactor.

Its subcellular location is the secreted. It localises to the extracellular space. The protein localises to the extracellular matrix. The enzyme catalyses Cleavage of 14-Ala-|-Leu-15 and 16-Tyr-|-Leu-17 in B chain of insulin. No action on collagen types I, II, IV, V. Cleaves gelatin chain alpha2(I) &gt; alpha1(I).. Degrades casein, gelatins of types I, III, IV, and V, and fibronectin. Activates procollagenase. The protein is Matrilysin (MMP7) of Homo sapiens (Human).